Consider the following 351-residue polypeptide: D-alanine--D-alanine ligase (351 aa).

The region spanning 135–344 (KMAFAQAGLP…FAELVDQLIQ (210 aa)) is the ATP-grasp domain. 171 to 226 (EQRLGYPCFVKPANLGSSVGIAKVRSRSELEKALDSAASYDRRIVIETGVKAREVE) lines the ATP pocket. 3 residues coordinate Mg(2+): Asp-297, Glu-311, and Asn-313.

Belongs to the D-alanine--D-alanine ligase family. The cofactor is Mg(2+). Mn(2+) is required as a cofactor.

Its subcellular location is the cytoplasm. It catalyses the reaction 2 D-alanine + ATP = D-alanyl-D-alanine + ADP + phosphate + H(+). The protein operates within cell wall biogenesis; peptidoglycan biosynthesis. In terms of biological role, cell wall formation. In Rippkaea orientalis (strain PCC 8801 / RF-1) (Cyanothece sp. (strain PCC 8801)), this protein is D-alanine--D-alanine ligase.